A 118-amino-acid chain; its full sequence is V-type proton ATPase subunit G 1 (118 aa).

Alanine 2 carries the post-translational modification N-acetylalanine. Positions 19-42 (AEKVSEARKRKNRRLKQAKEEAQA) are disordered.

Belongs to the V-ATPase G subunit family. V-ATPase is a heteromultimeric enzyme made up of two complexes: the ATP-hydrolytic V1 complex and the proton translocation V0 complex. The V1 complex consists of three catalytic AB heterodimers that form a heterohexamer, three peripheral stalks each consisting of EG heterodimers, one central rotor including subunits D and F, and the regulatory subunits C and H. The proton translocation complex V0 consists of the proton transport subunit a, a ring of proteolipid subunits c9c'', rotary subunit d, subunits e and f, and the accessory subunits ATP6AP1/Ac45 and ATP6AP2/PRR. Brain, heart, kidney and spleen.

The protein localises to the apical cell membrane. In terms of biological role, subunit of the V1 complex of vacuolar(H+)-ATPase (V-ATPase), a multisubunit enzyme composed of a peripheral complex (V1) that hydrolyzes ATP and a membrane integral complex (V0) that translocates protons. V-ATPase is responsible for acidifying and maintaining the pH of intracellular compartments and in some cell types, is targeted to the plasma membrane, where it is responsible for acidifying the extracellular environment. In aerobic conditions, involved in intracellular iron homeostasis, thus triggering the activity of Fe(2+) prolyl hydroxylase (PHD) enzymes, and leading to HIF1A hydroxylation and subsequent proteasomal degradation. The sequence is that of V-type proton ATPase subunit G 1 (ATP6V1G1) from Bos taurus (Bovine).